A 155-amino-acid chain; its full sequence is Ribosomal RNA large subunit methyltransferase H (155 aa).

Residues Leu72, Gly103, and 122–127 (LSPLTL) contribute to the S-adenosyl-L-methionine site.

This sequence belongs to the RNA methyltransferase RlmH family. As to quaternary structure, homodimer.

Its subcellular location is the cytoplasm. It carries out the reaction pseudouridine(1915) in 23S rRNA + S-adenosyl-L-methionine = N(3)-methylpseudouridine(1915) in 23S rRNA + S-adenosyl-L-homocysteine + H(+). In terms of biological role, specifically methylates the pseudouridine at position 1915 (m3Psi1915) in 23S rRNA. The chain is Ribosomal RNA large subunit methyltransferase H from Histophilus somni (strain 2336) (Haemophilus somnus).